The following is a 351-amino-acid chain: Methylthioribose-1-phosphate isomerase (351 aa).

Residues 53–55, arginine 96, and glutamine 205 contribute to the substrate site; that span reads RGA. Aspartate 246 acts as the Proton donor in catalysis. 256 to 257 contributes to the substrate binding site; that stretch reads NK.

Belongs to the eIF-2B alpha/beta/delta subunits family. MtnA subfamily.

It carries out the reaction 5-(methylsulfanyl)-alpha-D-ribose 1-phosphate = 5-(methylsulfanyl)-D-ribulose 1-phosphate. The protein operates within amino-acid biosynthesis; L-methionine biosynthesis via salvage pathway; L-methionine from S-methyl-5-thio-alpha-D-ribose 1-phosphate: step 1/6. Functionally, catalyzes the interconversion of methylthioribose-1-phosphate (MTR-1-P) into methylthioribulose-1-phosphate (MTRu-1-P). This chain is Methylthioribose-1-phosphate isomerase, found in Synechocystis sp. (strain ATCC 27184 / PCC 6803 / Kazusa).